The sequence spans 770 residues: Transferrin receptor protein 1 (770 aa).

The Cytoplasmic segment spans residues 1–70 (MMDQARSAFS…KPKRCNGFIC (70 aa)). A mediates interaction with SH3BP4 region spans residues 1-70 (MMDQARSAFS…KPKRCNGFIC (70 aa)). S10 and S19 each carry phosphoserine. Position 20 is a phosphotyrosine (Y20). The short motif at 20–23 (YTRF) is the Endocytosis signal element. Position 21 is a phosphothreonine (T21). S24 bears the Phosphoserine mark. The Stop-transfer sequence motif lies at 61-64 (KPKR). 2 S-palmitoyl cysteine lipidation sites follow: C65 and C70. A helical; Signal-anchor for type II membrane protein transmembrane segment spans residues 71 to 90 (YGTIAVVLFFLIGFMIGYLG). Topologically, residues 91–770 (YCKRVEPKAG…GDIWDIDNEF (680 aa)) are extracellular. Positions 102–122 (ERPTGTEALGTERTEPSETEE) are disordered. O-linked (GalNAc...) threonine glycosylation is present at T107. The PA domain maps to 233–323 (SKATTVTGRL…GTGDPYTPGF (91 aa)). N-linked (GlcNAc...) asparagine glycans are attached at residues N261, N327, and N384. The tract at residues 579-770 (TMDLYENLNQ…GDIWDIDNEF (192 aa)) is ligand-binding. Positions 656–658 (RGD) match the Cell attachment site motif. 2 N-linked (GlcNAc...) asparagine glycosylation sites follow: N732 and N737.

Belongs to the peptidase M28 family. M28B subfamily. In terms of assembly, homodimer; disulfide-linked. Binds one transferrin molecule per subunit. Interacts with SH3BP4. Interacts with STEAP3; facilitates TFRC endocytosis in erythroid precursor cells. In terms of processing, stearoylated by ZDHHC6 which inhibits TFRC-mediated activation of the JNK pathway and promotes mitochondrial fragmentation. Stearoylation does not affect iron uptake. Post-translationally, N- and O-glycosylated, phosphorylated and palmitoylated.

Its subcellular location is the cell membrane. The protein resides in the melanosome. In terms of biological role, cellular uptake of iron occurs via receptor-mediated endocytosis of ligand-occupied transferrin receptor into specialized endosomes. Endosomal acidification leads to iron release. The apotransferrin-receptor complex is then recycled to the cell surface with a return to neutral pH and the concomitant loss of affinity of apotransferrin for its receptor. Transferrin receptor is necessary for development of erythrocytes and the nervous system. Positively regulates T and B cell proliferation through iron uptake. Acts as a lipid sensor that regulates mitochondrial fusion by regulating activation of the JNK pathway. When dietary levels of stearate (C18:0) are low, promotes activation of the JNK pathway, resulting in HUWE1-mediated ubiquitination and subsequent degradation of the mitofusin MFN2 and inhibition of mitochondrial fusion. When dietary levels of stearate (C18:0) are high, TFRC stearoylation inhibits activation of the JNK pathway and thus degradation of the mitofusin MFN2. Mediates uptake of NICOL1 into fibroblasts where it may regulate extracellular matrix production. The protein is Transferrin receptor protein 1 (TFRC) of Canis lupus familiaris (Dog).